We begin with the raw amino-acid sequence, 204 residues long: GTP cyclohydrolase 1 (204 aa).

3 residues coordinate Zn(2+): cysteine 93, histidine 96, and cysteine 164.

Belongs to the GTP cyclohydrolase I family. As to quaternary structure, toroid-shaped homodecamer, composed of two pentamers of five dimers.

It carries out the reaction GTP + H2O = 7,8-dihydroneopterin 3'-triphosphate + formate + H(+). Its pathway is cofactor biosynthesis; 7,8-dihydroneopterin triphosphate biosynthesis; 7,8-dihydroneopterin triphosphate from GTP: step 1/1. This is GTP cyclohydrolase 1 from Rhizobium meliloti (strain 1021) (Ensifer meliloti).